A 232-amino-acid polypeptide reads, in one-letter code: Cytidylate kinase (232 aa).

Residue Gly15–Thr23 coordinates ATP. The tract at residues Lys164–Ala192 is disordered. Residues Glu178–Arg189 are compositionally biased toward basic and acidic residues.

It belongs to the cytidylate kinase family. Type 1 subfamily.

The protein resides in the cytoplasm. It carries out the reaction CMP + ATP = CDP + ADP. The enzyme catalyses dCMP + ATP = dCDP + ADP. In Solibacter usitatus (strain Ellin6076), this protein is Cytidylate kinase.